The following is a 140-amino-acid chain: Putative pre-16S rRNA nuclease (140 aa).

It belongs to the YqgF nuclease family.

The protein resides in the cytoplasm. In terms of biological role, could be a nuclease involved in processing of the 5'-end of pre-16S rRNA. The protein is Putative pre-16S rRNA nuclease of Halalkalibacterium halodurans (strain ATCC BAA-125 / DSM 18197 / FERM 7344 / JCM 9153 / C-125) (Bacillus halodurans).